A 131-amino-acid chain; its full sequence is Small ribosomal subunit protein uS8 (131 aa).

The interval 1-27 (MSMTDPVADMLTRIRNGQRASKNEVSM) is disordered.

The protein belongs to the universal ribosomal protein uS8 family. Part of the 30S ribosomal subunit. Contacts proteins S5 and S12.

In terms of biological role, one of the primary rRNA binding proteins, it binds directly to 16S rRNA central domain where it helps coordinate assembly of the platform of the 30S subunit. The polypeptide is Small ribosomal subunit protein uS8 (Thioalkalivibrio sulfidiphilus (strain HL-EbGR7)).